Reading from the N-terminus, the 359-residue chain is Fructose-bisphosphate aldolase (359 aa).

Ser-50 contacts D-glyceraldehyde 3-phosphate. Asp-83 functions as the Proton donor in the catalytic mechanism. The Zn(2+) site is built by His-84, Asp-105, Glu-142, and His-198. Dihydroxyacetone phosphate is bound at residue Gly-199. His-232 is a Zn(2+) binding site. Dihydroxyacetone phosphate-binding positions include 233-235 and 275-278; these read GSS and NIDT.

Zn(2+) serves as cofactor.

It carries out the reaction beta-D-fructose 1,6-bisphosphate = D-glyceraldehyde 3-phosphate + dihydroxyacetone phosphate. It participates in carbohydrate degradation; glycolysis; D-glyceraldehyde 3-phosphate and glycerone phosphate from D-glucose: step 4/4. Catalyzes the aldol condensation of dihydroxyacetone phosphate (DHAP or glycerone-phosphate) with glyceraldehyde 3-phosphate (G3P) to form fructose 1,6-bisphosphate (FBP) in gluconeogenesis and the reverse reaction in glycolysis. The protein is Fructose-bisphosphate aldolase of Nostoc sp. (strain PCC 7120 / SAG 25.82 / UTEX 2576).